The sequence spans 70 residues: Large ribosomal subunit protein bL31 (70 aa).

Residues Cys16, Cys18, Cys37, and Cys40 each coordinate Zn(2+).

Belongs to the bacterial ribosomal protein bL31 family. Type A subfamily. As to quaternary structure, part of the 50S ribosomal subunit. Zn(2+) is required as a cofactor.

Functionally, binds the 23S rRNA. This is Large ribosomal subunit protein bL31 from Ectopseudomonas mendocina (strain ymp) (Pseudomonas mendocina).